The following is a 346-amino-acid chain: Holliday junction branch migration complex subunit RuvB (346 aa).

Positions 4 to 185 are large ATPase domain (RuvB-L); that stretch reads SDRIITASPF…FGIVSRLEFY (182 aa). Residues Leu24, Arg25, Gly66, Lys69, Thr70, Thr71, 132–134, Arg175, Tyr185, and Arg222 each bind ATP; that span reads EDY. Residue Thr70 coordinates Mg(2+). The small ATPAse domain (RuvB-S) stretch occupies residues 186 to 256; it reads TSDELSKIVT…VADAALQMLD (71 aa). The segment at 259–346 is head domain (RuvB-H); that stretch reads AAGLDVLDRK…AATPGLFNPD (88 aa). The DNA site is built by Arg295, Arg314, and Arg319.

Belongs to the RuvB family. Homohexamer. Forms an RuvA(8)-RuvB(12)-Holliday junction (HJ) complex. HJ DNA is sandwiched between 2 RuvA tetramers; dsDNA enters through RuvA and exits via RuvB. An RuvB hexamer assembles on each DNA strand where it exits the tetramer. Each RuvB hexamer is contacted by two RuvA subunits (via domain III) on 2 adjacent RuvB subunits; this complex drives branch migration. In the full resolvosome a probable DNA-RuvA(4)-RuvB(12)-RuvC(2) complex forms which resolves the HJ.

Its subcellular location is the cytoplasm. The catalysed reaction is ATP + H2O = ADP + phosphate + H(+). Its function is as follows. The RuvA-RuvB-RuvC complex processes Holliday junction (HJ) DNA during genetic recombination and DNA repair, while the RuvA-RuvB complex plays an important role in the rescue of blocked DNA replication forks via replication fork reversal (RFR). RuvA specifically binds to HJ cruciform DNA, conferring on it an open structure. The RuvB hexamer acts as an ATP-dependent pump, pulling dsDNA into and through the RuvAB complex. RuvB forms 2 homohexamers on either side of HJ DNA bound by 1 or 2 RuvA tetramers; 4 subunits per hexamer contact DNA at a time. Coordinated motions by a converter formed by DNA-disengaged RuvB subunits stimulates ATP hydrolysis and nucleotide exchange. Immobilization of the converter enables RuvB to convert the ATP-contained energy into a lever motion, pulling 2 nucleotides of DNA out of the RuvA tetramer per ATP hydrolyzed, thus driving DNA branch migration. The RuvB motors rotate together with the DNA substrate, which together with the progressing nucleotide cycle form the mechanistic basis for DNA recombination by continuous HJ branch migration. Branch migration allows RuvC to scan DNA until it finds its consensus sequence, where it cleaves and resolves cruciform DNA. This chain is Holliday junction branch migration complex subunit RuvB, found in Nitrosomonas eutropha (strain DSM 101675 / C91 / Nm57).